The following is a 255-amino-acid chain: Urease accessory protein UreD 1 (255 aa).

It belongs to the UreD family. As to quaternary structure, ureD, UreF and UreG form a complex that acts as a GTP-hydrolysis-dependent molecular chaperone, activating the urease apoprotein by helping to assemble the nickel containing metallocenter of UreC. The UreE protein probably delivers the nickel.

The protein resides in the cytoplasm. Required for maturation of urease via the functional incorporation of the urease nickel metallocenter. The chain is Urease accessory protein UreD 1 from Streptomyces griseus subsp. griseus (strain JCM 4626 / CBS 651.72 / NBRC 13350 / KCC S-0626 / ISP 5235).